A 493-amino-acid polypeptide reads, in one-letter code: Cytochrome P450 monooxygenase mfmF (493 aa).

The next 2 membrane-spanning stretches (helical) occupy residues 3–23 and 301–321; these read SLIP…RLFF and VLFA…FHLV. Residue Cys440 participates in heme binding.

It belongs to the cytochrome P450 family. Heme is required as a cofactor.

The protein resides in the membrane. It participates in secondary metabolite biosynthesis; terpenoid biosynthesis. In terms of biological role, cytochrome P450 monooxygenase; part of the gene cluster that mediates the biosynthesis of the phthalide-terpenoid hybrid 11'-O-desmethylfendlerol. Within the pathway, mfmF catalyzes C-3 hydroxylation of 5-hydroxy-4-(hydroxymethyl)-7-methoxy-6-methylphthalide to yield cyclopolic acid. The biosynthesis of 11'-O-desmethylfendlerol begins with the NR-PKS mfmB that forms 3,5-dimethylorsellinic acid (DMOA), which is then transformed into the phthalide 5,7-dihydroxy-4-(hydroxymethyl)-6-methylphthalide by the cytochrome P450 monooxygenase mfmA and the hydrolase mfmC. Subsequently, the methyltransferase mfmE catalyzes 7-O-methylation to yield 5-hydroxy-4-(hydroxymethyl)-7-methoxy-6-methylphthalide, which undergoes C-3 hydroxylation by the cytochrome P450 monooxygenase mfmF. The resultant cyclopolic acid (2,5-dihydroxy-4-(hydroxymethyl)-7-methoxy-6-methylphthalide) is then farnesylated by the DMATS-type prenyltransferase mfmD to afford 5-O-farnesylcyclopolic acid. Finally, the Pyr4-family terpene cyclase mfmH cyclizes the farnesyl moiety of 5-O-farnesylcyclopolic acid into a drimane-like structure, thus completing the biosynthesis of 11'-O-desmethylfendlerol. This is Cytochrome P450 monooxygenase mfmF from Annulohypoxylon moriforme (Filamentous fungus).